A 428-amino-acid chain; its full sequence is 3-phosphoshikimate 1-carboxyvinyltransferase (428 aa).

3-phosphoshikimate contacts are provided by Lys23, Ser24, and Arg28. Lys23 contacts phosphoenolpyruvate. Gly97 and Arg125 together coordinate phosphoenolpyruvate. Ser170, Ser171, Gln172, Ser198, Asp314, Asn337, and Lys341 together coordinate 3-phosphoshikimate. Gln172 is a phosphoenolpyruvate binding site. Asp314 serves as the catalytic Proton acceptor. 3 residues coordinate phosphoenolpyruvate: Arg345, Arg387, and Lys412.

The protein belongs to the EPSP synthase family. Monomer.

The protein resides in the cytoplasm. The catalysed reaction is 3-phosphoshikimate + phosphoenolpyruvate = 5-O-(1-carboxyvinyl)-3-phosphoshikimate + phosphate. Its pathway is metabolic intermediate biosynthesis; chorismate biosynthesis; chorismate from D-erythrose 4-phosphate and phosphoenolpyruvate: step 6/7. Its function is as follows. Catalyzes the transfer of the enolpyruvyl moiety of phosphoenolpyruvate (PEP) to the 5-hydroxyl of shikimate-3-phosphate (S3P) to produce enolpyruvyl shikimate-3-phosphate and inorganic phosphate. In Yersinia pestis bv. Antiqua (strain Antiqua), this protein is 3-phosphoshikimate 1-carboxyvinyltransferase.